A 513-amino-acid polypeptide reads, in one-letter code: Acyltransferase uat1 (513 aa).

H158 functions as the Proton acceptor in the catalytic mechanism.

The protein belongs to the plant acyltransferase family.

It functions in the pathway secondary metabolite biosynthesis. Its function is as follows. Acyltransferase; part of the gene cluster that mediates the biosynthesis of the glycolipid biosurfactant ustilagic acid (UA). UA is a secreted cellobiose glycolipid that is toxic for many microorganisms and confers biocontrol activity to U.maydis. UA consists of 15,16-dihydroxypalmitic or 2,15,16-trihydroxypalmitic acid, which is O-glycosidically linked to cellobiose at its terminal hydroxyl group. In addition, the cellobiose moiety is acetylated and acylated with a short-chain hydroxy fatty acid. UA biosynthesis starts with omega-hydroxylation of palmitic acid catalyzed by the cytochrome P450 monooxygenase cyp1. Terminal hydroxylation of palmitic acid precedes subterminal hydroxylation catalyzed by the cytochrome P450 monooxygenase cyp2. Sequential glucosylation of the hydroxy fatty acid is probably catalyzed by the glycosyltransferase ugt1. The cellobiose lipid is further decorated by acetylation of the proximal glucose residue and by acylation with a short-chain beta-hydroxy fatty acid at the distal glucose residue. The acyltransferase uat1 may be a good candidate for catalyzing either acetylation or acylation of the cellobiose lipid. The fatty acid synthase fas2 may be involved in synthesis of the carbon backbone of the short-chain beta-hydroxy fatty acid esterified to the cellobiose disaccharide. The secreted UA consists of a mixture of both alpha-hydroxylated and non-hydroxylated glycolipids; therefore, alpha-hydroxylation of the long-chain fatty, catalyzed by the fatty acid hydroxylase ahd1, occurs late in UA biosynthesis and may be the last step before secretion. The protein is Acyltransferase uat1 of Mycosarcoma maydis (Corn smut fungus).